We begin with the raw amino-acid sequence, 237 residues long: Urease accessory protein UreF (237 aa).

It belongs to the UreF family. UreD, UreF and UreG form a complex that acts as a GTP-hydrolysis-dependent molecular chaperone, activating the urease apoprotein by helping to assemble the nickel containing metallocenter of UreC. The UreE protein probably delivers the nickel.

The protein resides in the cytoplasm. Required for maturation of urease via the functional incorporation of the urease nickel metallocenter. In Methylibium petroleiphilum (strain ATCC BAA-1232 / LMG 22953 / PM1), this protein is Urease accessory protein UreF.